The chain runs to 371 residues: Cytochrome b (371 aa).

A run of 4 helical transmembrane segments spans residues 24-44, 68-89, 104-124, and 169-189; these read FGSM…FLAL, WTMQ…YIHI, WLSG…GYVL, and FFAL…VHIV. 2 residues coordinate heme b: H74 and H88. 2 residues coordinate heme b: H173 and H187. H192 is an a ubiquinone binding site. 4 consecutive transmembrane segments (helical) span residues 217–237, 279–299, 311–331, and 338–357; these read YKDT…MSFA, LGGT…PFTH, LSQL…WTAT, and FITI…MTNP.

Belongs to the cytochrome b family. The cytochrome bc1 complex contains 3 respiratory subunits (MT-CYB, CYC1 and UQCRFS1), 2 core proteins (UQCRC1 and UQCRC2) and probably 6 low-molecular weight proteins. The cofactor is heme b.

The protein resides in the mitochondrion inner membrane. Component of the ubiquinol-cytochrome c reductase complex (complex III or cytochrome b-c1 complex) that is part of the mitochondrial respiratory chain. The b-c1 complex mediates electron transfer from ubiquinol to cytochrome c. Contributes to the generation of a proton gradient across the mitochondrial membrane that is then used for ATP synthesis. The chain is Cytochrome b (MT-CYB) from Homoroselaps lacteus (Spotted harlequin snake).